Here is a 415-residue protein sequence, read N- to C-terminus: Carboxypeptidase G2 (415 aa).

Positions 1-22 are cleaved as a signal peptide; it reads MRPSIHRTAIAAVLATAFVAGT. A Zn(2+)-binding site is contributed by histidine 112. Residue aspartate 114 is part of the active site. Zn(2+) is bound at residue aspartate 141. The Proton acceptor role is filled by glutamate 175. Zn(2+)-binding residues include glutamate 176, glutamate 200, and histidine 385.

This sequence belongs to the peptidase M20A family. As to quaternary structure, homodimer. Zn(2+) serves as cofactor.

It catalyses the reaction Release of C-terminal glutamate residues from a wide range of N-acylating moieties, including peptidyl, aminoacyl, benzoyl, benzyloxycarbonyl, folyl and pteroyl groups.. Functionally, catalyzes the hydrolysis of reduced and non-reduced folates to pteroates and L-glutamate. This enzyme has a broad specificity. The polypeptide is Carboxypeptidase G2 (cpg2) (Pseudomonas sp. (strain RS-16)).